Consider the following 153-residue polypeptide: UPF0178 protein Ccel_2994 (153 aa).

This sequence belongs to the UPF0178 family.

This Ruminiclostridium cellulolyticum (strain ATCC 35319 / DSM 5812 / JCM 6584 / H10) (Clostridium cellulolyticum) protein is UPF0178 protein Ccel_2994.